The chain runs to 279 residues: Ribonuclease T2 protein rnst-2 (279 aa).

A signal peptide spans 1–17 (MKLLLLLCISCIPLAYS). Residues cysteine 37 and cysteine 48 are joined by a disulfide bond. Residue histidine 60 is part of the active site. N-linked (GlcNAc...) asparagine glycosylation is present at asparagine 68. Catalysis depends on residues glutamate 114 and histidine 118. Cysteines 200 and 210 form a disulfide.

This sequence belongs to the RNase T2 family. In terms of tissue distribution, expressed in the pharynx, hypodermis, muscle cells, sheath cells, intestinal cells, the vulva and tail regions.

Its subcellular location is the lysosome. It carries out the reaction a ribonucleotidyl-ribonucleotide-RNA + H2O = a 3'-end 3'-phospho-ribonucleotide-RNA + a 5'-end dephospho-ribonucleoside-RNA + H(+). Functionally, probable endoribonuclease involved in the autophagy-mediated degradation of ribosomal RNA and ribosomal proteins in lysosomes. In Caenorhabditis elegans, this protein is Ribonuclease T2 protein rnst-2.